We begin with the raw amino-acid sequence, 147 residues long: MHLTADQVAALKASWPEVSAGDGGAQLGLEMFTRYFDENPQMMFVFGYSGRTSALKHNSKLQNHGKIIVHQIGQAVSELDDGSKFEATLHKLGQEHKGFGDIKGEYFPALGDALLEAMNSKVHGLDRTLWAAGYRVISDALIAGLES.

Residues 2–146 (HLTADQVAAL…ISDALIAGLE (145 aa)) enclose the Globin domain. Histidine 96 is a binding site for heme b.

This sequence belongs to the globin family. In terms of assembly, polymer.

This Glycera dibranchiata (Bloodworm) protein is Globin, polymeric component P3.